Here is a 188-residue protein sequence, read N- to C-terminus: Putative manganese efflux pump MntP (188 aa).

6 helical membrane passes run 3–23, 41–61, 66–86, 107–129, 143–163, and 168–188; these read ITAT…ASIG, LIFG…GMLA, LEWN…RMII, LLVT…LAFL, ATLI…PLLG, and ILGG…HFHG.

Belongs to the MntP (TC 9.B.29) family.

It is found in the cell inner membrane. Probably functions as a manganese efflux pump. The polypeptide is Putative manganese efflux pump MntP (Citrobacter koseri (strain ATCC BAA-895 / CDC 4225-83 / SGSC4696)).